The sequence spans 84 residues: Polyketide-8 synthase acyl carrier protein 1 (84 aa).

Residues 7–82 (AARKQEIKEI…GVYVVVSEAA (76 aa)) form the Carrier domain. Ser42 is modified (O-(pantetheine 4'-phosphoryl)serine).

Post-translationally, 4'-phosphopantetheine is transferred from CoA to a specific serine of the apo-ACP-like protein.

Functionally, acyl carrier protein. The protein is Polyketide-8 synthase acyl carrier protein 1 of Streptomyces avermitilis (strain ATCC 31267 / DSM 46492 / JCM 5070 / NBRC 14893 / NCIMB 12804 / NRRL 8165 / MA-4680).